Consider the following 587-residue polypeptide: Succinate dehydrogenase flavoprotein subunit (587 aa).

FAD-binding positions include 15-20 (GAGGAG), 39-54 (SKVFPTRSHTVSAQGG), and D223. A Tele-8alpha-FAD histidine modification is found at H47. Residues H244 and T256 each coordinate substrate. R288 serves as the catalytic Proton acceptor. H355 contacts substrate. E389 provides a ligand contact to FAD. A substrate-binding site is contributed by R400. 405–406 (SL) contributes to the FAD binding site.

This sequence belongs to the FAD-dependent oxidoreductase 2 family. FRD/SDH subfamily. Part of an enzyme complex containing four subunits: a flavoprotein, an iron-sulfur protein, cytochrome b-556 and a hydrophobic protein. FAD serves as cofactor.

The protein localises to the cell inner membrane. The enzyme catalyses a quinone + succinate = fumarate + a quinol. It functions in the pathway carbohydrate metabolism; tricarboxylic acid cycle; fumarate from succinate (bacterial route): step 1/1. This Coxiella burnetii (strain RSA 493 / Nine Mile phase I) protein is Succinate dehydrogenase flavoprotein subunit (sdhA).